The following is a 322-amino-acid chain: Tyrosine recombinase XerC (322 aa).

Residues 14–104 (PDLREAAAAW…ALRSFARHLD (91 aa)) enclose the Core-binding (CB) domain. The 187-residue stretch at 125–311 (RLPRPLPVAA…DSARLLSAFD (187 aa)) folds into the Tyr recombinase domain. Catalysis depends on residues Arg170, Lys195, His263, Arg266, and His289. The O-(3'-phospho-DNA)-tyrosine intermediate role is filled by Tyr298.

The protein belongs to the 'phage' integrase family. XerC subfamily. As to quaternary structure, forms a cyclic heterotetrameric complex composed of two molecules of XerC and two molecules of XerD.

Its subcellular location is the cytoplasm. In terms of biological role, site-specific tyrosine recombinase, which acts by catalyzing the cutting and rejoining of the recombining DNA molecules. The XerC-XerD complex is essential to convert dimers of the bacterial chromosome into monomers to permit their segregation at cell division. It also contributes to the segregational stability of plasmids. This chain is Tyrosine recombinase XerC, found in Methylobacterium nodulans (strain LMG 21967 / CNCM I-2342 / ORS 2060).